Reading from the N-terminus, the 212-residue chain is Proteasome subunit beta (212 aa).

A propeptide spans 1–11 (MSQEHQDVKTG) (removed in mature form; by autocatalysis). Residue threonine 12 is the Nucleophile of the active site.

Belongs to the peptidase T1B family. In terms of assembly, the 20S proteasome core is composed of 14 alpha and 14 beta subunits that assemble into four stacked heptameric rings, resulting in a barrel-shaped structure. The two inner rings, each composed of seven catalytic beta subunits, are sandwiched by two outer rings, each composed of seven alpha subunits. The catalytic chamber with the active sites is on the inside of the barrel. Has a gated structure, the ends of the cylinder being occluded by the N-termini of the alpha-subunits. Is capped at one or both ends by the proteasome regulatory ATPase, PAN.

Its subcellular location is the cytoplasm. The catalysed reaction is Cleavage of peptide bonds with very broad specificity.. With respect to regulation, the formation of the proteasomal ATPase PAN-20S proteasome complex, via the docking of the C-termini of PAN into the intersubunit pockets in the alpha-rings, triggers opening of the gate for substrate entry. Interconversion between the open-gate and close-gate conformations leads to a dynamic regulation of the 20S proteasome proteolysis activity. Its function is as follows. Component of the proteasome core, a large protease complex with broad specificity involved in protein degradation. This is Proteasome subunit beta from Methanocorpusculum labreanum (strain ATCC 43576 / DSM 4855 / Z).